The chain runs to 200 residues: dITP/XTP pyrophosphatase (200 aa).

Residue 7–12 (TSNKHK) participates in substrate binding. Mg(2+) contacts are provided by glutamate 38 and aspartate 73. Aspartate 73 functions as the Proton acceptor in the catalytic mechanism. Residues serine 74, 154-157 (FGYD), lysine 177, and 182-183 (HR) each bind substrate.

The protein belongs to the HAM1 NTPase family. In terms of assembly, homodimer. It depends on Mg(2+) as a cofactor.

The catalysed reaction is XTP + H2O = XMP + diphosphate + H(+). It carries out the reaction dITP + H2O = dIMP + diphosphate + H(+). It catalyses the reaction ITP + H2O = IMP + diphosphate + H(+). Its function is as follows. Pyrophosphatase that catalyzes the hydrolysis of nucleoside triphosphates to their monophosphate derivatives, with a high preference for the non-canonical purine nucleotides XTP (xanthosine triphosphate), dITP (deoxyinosine triphosphate) and ITP. Seems to function as a house-cleaning enzyme that removes non-canonical purine nucleotides from the nucleotide pool, thus preventing their incorporation into DNA/RNA and avoiding chromosomal lesions. This is dITP/XTP pyrophosphatase from Campylobacter jejuni subsp. doylei (strain ATCC BAA-1458 / RM4099 / 269.97).